The chain runs to 245 residues: Phycocyanobilin:ferredoxin oxidoreductase (245 aa).

Belongs to the HY2 family.

It catalyses the reaction (2R,3Z)-phycocyanobilin + 4 oxidized [2Fe-2S]-[ferredoxin] = biliverdin IXalpha + 4 reduced [2Fe-2S]-[ferredoxin] + 4 H(+). Functionally, catalyzes the four-electron reduction of biliverdin IX-alpha (2-electron reduction at both the A and D rings); the reaction proceeds via an isolatable 2-electron intermediate, 181,182-dihydrobiliverdin. This is Phycocyanobilin:ferredoxin oxidoreductase from Trichormus variabilis (strain ATCC 29413 / PCC 7937) (Anabaena variabilis).